The chain runs to 130 residues: HTH-type transcriptional regulator KmtR (130 aa).

One can recognise an HTH arsR-type domain in the interval 10–104 (LPDDQVCLVV…DAVFNAEHAG (95 aa)). Residues 44–67 (VNELAEQVGKPAPSVSQHLAKLRM) constitute a DNA-binding region (H-T-H motif). A disordered region spans residues 110–130 (HHRAAGGLQSVAKASATKDVG).

Its activity is regulated as follows. Binding to DNA is inhibited by nickel and cobalt ions. Functionally, represses expression of Rv2025c and its own expression. Acts by binding to the promoter regions. This is HTH-type transcriptional regulator KmtR (kmtR) from Mycobacterium tuberculosis (strain ATCC 25618 / H37Rv).